Reading from the N-terminus, the 391-residue chain is Salivary protein TRIO (391 aa).

A signal peptide spans 1–24; it reads MCRGLSAVLILLVSLSAQLHVVVG. An N-linked (GlcNAc...) asparagine glycan is attached at asparagine 323.

In terms of tissue distribution, female salivary gland (at protein level). Female saliva (at protein level). Not detected in female midgut, head and carcass (at protein level). Not detected in male tissues (at protein level).

It localises to the secreted. Functionally, required for efficient probing on a mammalian host. Alters the local inflammatory response in the host skin following a mosquito bite by suppressing TNF-alpha/TNF expression. In terms of biological role, (Microbial infection) Contributes to optimal transmission of Plasmodium berghei sporozoites to mice. Its function is as follows. (Microbial infection) Contributes to optimal transmission of Plasmodium falciparum sporozoites to mammalian host. The chain is Salivary protein TRIO from Anopheles gambiae (African malaria mosquito).